Here is a 343-residue protein sequence, read N- to C-terminus: Vancomycin C-type resistance protein VanC1 (343 aa).

In terms of domain architecture, ATP-grasp spans 134 to 336; sequence HQLADTMGIA…YEILVEQLIA (203 aa). 164–219 serves as a coordination point for ATP; that stretch reads IQDHGFPIFIKPNEAGSSKGITKVTDKTALQSALTTAFAYGSTVLIQKAIAGIEIG. Mg(2+) is bound by residues D290, E303, and N305. The Mn(2+) site is built by D290, E303, and N305.

It belongs to the D-alanine--D-alanine ligase family. Mg(2+) serves as cofactor. Requires Mn(2+) as cofactor.

It localises to the cell membrane. The catalysed reaction is D-serine + D-alanine + ATP = D-alanyl-D-serine + ADP + phosphate + H(+). In terms of biological role, D-alanine--D-alanine ligase of altered specificity, which catalyzes synthesis of D-Ala-D-Ser; produces a peptidoglycan which does not terminate in D-alanine but in D-serine, thus probably reducing affinity for vancomycin. Together with VanT and VanXYC, required for vancomycin resistance in E.gallinarum strain BM4174. This is Vancomycin C-type resistance protein VanC1 from Enterococcus gallinarum.